We begin with the raw amino-acid sequence, 219 residues long: Probable N-acetyltransferase camello (219 aa).

2 consecutive transmembrane segments (helical) span residues 44-64 (FITF…VLAL) and 66-86 (SLVA…HGLA). The 150-residue stretch at 62-211 (LALTSLVALL…VHQYTSFTVA (150 aa)) folds into the N-acetyltransferase domain.

It belongs to the camello family.

It localises to the golgi apparatus membrane. Plays a role in regulation of gastrulation, possibly by controlled reduction of cell adhesion in the periblastopore region which is necessary for optimal cell motility. This Xenopus tropicalis (Western clawed frog) protein is Probable N-acetyltransferase camello.